A 215-amino-acid chain; its full sequence is Large ribosomal subunit protein uL3 (215 aa).

Position 151 is an N5-methylglutamine (Q151).

It belongs to the universal ribosomal protein uL3 family. In terms of assembly, part of the 50S ribosomal subunit. Forms a cluster with proteins L14 and L19. Methylated by PrmB.

Functionally, one of the primary rRNA binding proteins, it binds directly near the 3'-end of the 23S rRNA, where it nucleates assembly of the 50S subunit. The polypeptide is Large ribosomal subunit protein uL3 (Rickettsia massiliae (strain Mtu5)).